A 137-amino-acid chain; its full sequence is ATP synthase epsilon chain (137 aa).

The protein belongs to the ATPase epsilon chain family. F-type ATPases have 2 components, CF(1) - the catalytic core - and CF(0) - the membrane proton channel. CF(1) has five subunits: alpha(3), beta(3), gamma(1), delta(1), epsilon(1). CF(0) has three main subunits: a, b and c.

Its subcellular location is the cellular thylakoid membrane. Produces ATP from ADP in the presence of a proton gradient across the membrane. In Synechococcus sp. (strain JA-2-3B'a(2-13)) (Cyanobacteria bacterium Yellowstone B-Prime), this protein is ATP synthase epsilon chain.